A 122-amino-acid polypeptide reads, in one-letter code: Large ribosomal subunit protein uL18 (122 aa).

The protein belongs to the universal ribosomal protein uL18 family. As to quaternary structure, part of the 50S ribosomal subunit; part of the 5S rRNA/L5/L18/L25 subcomplex. Contacts the 5S and 23S rRNAs.

Its function is as follows. This is one of the proteins that bind and probably mediate the attachment of the 5S RNA into the large ribosomal subunit, where it forms part of the central protuberance. The sequence is that of Large ribosomal subunit protein uL18 from Heliobacterium modesticaldum (strain ATCC 51547 / Ice1).